The sequence spans 40 residues: U2-myrmicitoxin-Tb1a (40 aa).

The N-terminal stretch at 1–3 is a signal peptide; it reads AEA. A propeptide spanning residues 4-29 is cleaved from the precursor; the sequence is MAEAMADAMADAMADAMADAMAEAAA. Arg-39 carries the arginine amide modification.

Belongs to the formicidae venom precursor-01 superfamily. As to expression, expressed by the venom gland.

It localises to the secreted. Its function is as follows. Venom protein with unknown function. Does not induce paralysis when a high dose is administered by intrathoracic injection into the blowfly Lucilia caesar. The protein is U2-myrmicitoxin-Tb1a of Tetramorium bicarinatum (Tramp ant).